The primary structure comprises 413 residues: Putative competence-damage inducible protein (413 aa).

Belongs to the CinA family.

This is Putative competence-damage inducible protein from Lacticaseibacillus casei (strain BL23) (Lactobacillus casei).